Reading from the N-terminus, the 329-residue chain is Delta-aminolevulinic acid dehydratase (329 aa).

Zn(2+) is bound by residues C122, C124, H131, and C132. K199 serves as the catalytic Schiff-base intermediate with substrate. An N6-succinyllysine modification is found at K199. Residue R209 coordinates 5-aminolevulinate. At S215 the chain carries Phosphoserine. R221 serves as a coordination point for 5-aminolevulinate. C223 is a binding site for Zn(2+). Residue K252 is the Schiff-base intermediate with substrate of the active site. K252 is subject to N6-succinyllysine. 5-aminolevulinate is bound by residues S279 and Y318.

Belongs to the ALAD family. In terms of assembly, homooctamer; active form. Homohexamer; low activity form. The cofactor is Zn(2+).

Its subcellular location is the cytoplasm. It is found in the cytosol. It catalyses the reaction 2 5-aminolevulinate = porphobilinogen + 2 H2O + H(+). Its pathway is porphyrin-containing compound metabolism; protoporphyrin-IX biosynthesis; coproporphyrinogen-III from 5-aminolevulinate: step 1/4. Can alternate between a fully active homooctamer and a low-activity homohexamer. A bound magnesium ion may promote the assembly of the fully active homooctamer. The magnesium-binding site is absent in the low-activity homohexamer. Inhibited by compounds that favor the hexameric state. Inhibited by divalent lead ions. The lead ions partially displace the zinc cofactor. Its function is as follows. Catalyzes an early step in the biosynthesis of tetrapyrroles. Binds two molecules of 5-aminolevulinate per subunit, each at a distinct site, and catalyzes their condensation to form porphobilinogen. This is Delta-aminolevulinic acid dehydratase (ALAD) from Bos taurus (Bovine).